The following is a 132-amino-acid chain: Cytochrome c-554 (132 aa).

The N-terminal stretch at 1 to 24 is a signal peptide; the sequence is MKSISMLTLAASVAFAVTAGQAVA. One can recognise a Cytochrome c domain in the interval 26–126; sequence GDPAAGEKVF…NVWAYLSQFG (101 aa). Heme c-binding residues include C38, C41, H42, and M104.

Post-translationally, binds 1 heme c group covalently per subunit.

The protein localises to the periplasm. The sequence is that of Cytochrome c-554 from Methylosinus trichosporium.